The primary structure comprises 530 residues: Transcriptional regulator VasH (530 aa).

Residues L193–A422 enclose the Sigma-54 factor interaction domain. ATP contacts are provided by residues G221–E228 and A284–E293.

Functionally, transcriptional regulator of the type VI secretion system. This is Transcriptional regulator VasH from Vibrio cholerae serotype O1 (strain ATCC 39315 / El Tor Inaba N16961).